We begin with the raw amino-acid sequence, 320 residues long: L-lactate dehydrogenase 2 (320 aa).

NAD(+) contacts are provided by residues 18 to 19, Asp40, and Arg45; that span reads AV. Substrate contacts are provided by residues Gln88, Arg94, and 126 to 129; that span reads NPVD. Residues 124-126 and Ser149 each bind NAD(+); that span reads ITN. 154-157 serves as a coordination point for substrate; the sequence is DSAR. Beta-D-fructose 1,6-bisphosphate-binding positions include Arg159 and 171-176; that span reads KNVHAY. His181 acts as the Proton acceptor in catalysis. Phosphotyrosine is present on Tyr228. Substrate is bound at residue Thr237.

Belongs to the LDH/MDH superfamily. LDH family. Homotetramer.

It localises to the cytoplasm. It carries out the reaction (S)-lactate + NAD(+) = pyruvate + NADH + H(+). Its pathway is fermentation; pyruvate fermentation to lactate; (S)-lactate from pyruvate: step 1/1. With respect to regulation, allosterically activated by fructose 1,6-bisphosphate (FBP). Catalyzes the conversion of lactate to pyruvate. The protein is L-lactate dehydrogenase 2 of Bifidobacterium longum subsp. longum (strain ATCC 15707 / DSM 20219 / JCM 1217 / NCTC 11818 / E194b).